We begin with the raw amino-acid sequence, 688 residues long: Eukaryotic translation initiation factor 3 subunit B (688 aa).

Residues 1–32 form a disordered region; sequence MAKKKGENYDSDGGDDQDYDEEPNFDDPEGFV. The segment covering 9-32 has biased composition (acidic residues); sequence YDSDGGDDQDYDEEPNFDDPEGFV. One can recognise an RRM domain in the interval 57 to 141; that stretch reads NVIVVDNIPV…HTLLVNLFSD (85 aa). WD repeat units follow at residues 208–246, 247–287, 291–329, 332–367, 440–482, and 527–572; these read RDRF…KINK, FPHS…EKRS, DGTS…LLDK, IKVQ…TLLE, EVKE…EPTM, and GDHF…KRVN. The stretch at 613-642 forms a coiled coil; that stretch reads RIRMTRASKELLEKRAKLREQFVEYRTKRV.

The protein belongs to the eIF-3 subunit B family. Component of the eukaryotic translation initiation factor 3 (eIF-3) complex.

It localises to the cytoplasm. Functionally, RNA-binding component of the eukaryotic translation initiation factor 3 (eIF-3) complex, which is involved in protein synthesis of a specialized repertoire of mRNAs and, together with other initiation factors, stimulates binding of mRNA and methionyl-tRNAi to the 40S ribosome. The eIF-3 complex specifically targets and initiates translation of a subset of mRNAs involved in cell proliferation. This chain is Eukaryotic translation initiation factor 3 subunit B, found in Aedes aegypti (Yellowfever mosquito).